The primary structure comprises 480 residues: NADH-quinone oxidoreductase subunit N (480 aa).

13 helical membrane passes run 5–25 (NFLC…LFLY), 40–60 (IAIV…FTMY), 69–89 (ISSQ…FLVF), 110–130 (VIML…NFVM), 162–182 (YILT…FLYG), 204–224 (LGFV…PFHL), 237–257 (VTAY…IFVL), 266–286 (LIWN…GNLF), 296–316 (FFAF…IAGT), 324–344 (IFYT…IASV), 368–388 (AFVM…AGFF), 404–424 (ILVF…LLIV), and 450–470 (MVIC…YEYI).

The protein belongs to the complex I subunit 2 family. In terms of assembly, NDH-1 is composed of 14 different subunits. Subunits NuoA, H, J, K, L, M, N constitute the membrane sector of the complex.

The protein resides in the cell inner membrane. It catalyses the reaction a quinone + NADH + 5 H(+)(in) = a quinol + NAD(+) + 4 H(+)(out). NDH-1 shuttles electrons from NADH, via FMN and iron-sulfur (Fe-S) centers, to quinones in the respiratory chain. The immediate electron acceptor for the enzyme in this species is believed to be a menaquinone. Couples the redox reaction to proton translocation (for every two electrons transferred, four hydrogen ions are translocated across the cytoplasmic membrane), and thus conserves the redox energy in a proton gradient. This Azobacteroides pseudotrichonymphae genomovar. CFP2 protein is NADH-quinone oxidoreductase subunit N.